The chain runs to 182 residues: MGNEKQILSADEIRRALVRIAHEIDERNGGLRDVVLVGIRSRGVPLAERIAAAIADFEGTRIPVGQLDITLYRDDLKLRGPAPRVRKTDLPIDITGKTVVLVDDVLFTGRTVRAALDAIADLGRPARIQLAVLIDRGHRELPIRADFVGKNVPTSLSERVMVRLRETDGVDEVVILRGSAND.

The PRPP-binding signature appears at Val-99 to Thr-111.

It belongs to the purine/pyrimidine phosphoribosyltransferase family. PyrR subfamily.

It catalyses the reaction UMP + diphosphate = 5-phospho-alpha-D-ribose 1-diphosphate + uracil. Its function is as follows. Regulates the transcription of the pyrimidine nucleotide (pyr) operon in response to exogenous pyrimidines. Functionally, also displays a weak uracil phosphoribosyltransferase activity which is not physiologically significant. This is Bifunctional protein PyrR from Chloroflexus aurantiacus (strain ATCC 29366 / DSM 635 / J-10-fl).